We begin with the raw amino-acid sequence, 102 residues long: Protein ORF28 (102 aa).

A helical membrane pass occupies residues valine 28–isoleucine 48.

It localises to the host membrane. In Homo sapiens (Human), this protein is Protein ORF28 (ORF28).